A 1079-amino-acid polypeptide reads, in one-letter code: Psi-producing oxygenase A (1079 aa).

Residues 105–446 (TNTFLTTLWN…DGSYDDNDLV (342 aa)) are linoleate 8R-lipoxygenase. Heme b is bound at residue His202. Residue Tyr374 is part of the active site. Position 377 (His377) interacts with heme b. Residues 654-1079 (QFINSHSACM…WDGDLPEVKE (426 aa)) are 9,12-octadecadienoate 8-hydroperoxide 8R-isomerase.

This sequence belongs to the peroxidase family. In terms of assembly, homotetramer. Requires heme b as cofactor.

It catalyses the reaction (9Z,12Z)-octadecadienoate + O2 = (8R,9Z,12Z)-8-hydroperoxyoctadeca-9,12-dienoate. It carries out the reaction (8R,9Z,12Z)-8-hydroperoxyoctadeca-9,12-dienoate = (5S,8R,9Z,12Z)-5,8-dihydroxyoctadeca-9,12-dienoate. In terms of biological role, bifunctional heme-containing enzyme that oxidizes linoleic acid to (8R,9Z,12Z)-8-hydroperoxyoctadeca-9,12-dienoate (within the N-terminal heme peroxidase domain), which is subsequently isomerized to (5S,8R,9Z,12Z)-5,8-dihydroxyoctadeca-9,12-dienoate (within the C-terminal P450 heme thiolate domain). Oxidized unsaturated fatty acids, so-called oxylipins, derived from endogenous fatty acids, influence the development of the asexual conidiophores and sexual cleistothecia and regulate the secondary metabolism. These substances were collectively named psi factors and are primarily a mixture of hydroxylated oleic, linoleic and alpha-linolenic acids. They are termed psi-beta, psi-alpha, and psi-gamma, respectively. Oxylipins may also serve as activators of mammalian immune responses contributing to enhanced resistance to opportunistic fungi and as factors that modulate fungal development contributing to resistance to host defenses. The chain is Psi-producing oxygenase A (ppoA) from Aspergillus fumigatus (strain CBS 144.89 / FGSC A1163 / CEA10) (Neosartorya fumigata).